We begin with the raw amino-acid sequence, 209 residues long: Kynurenine formamidase (209 aa).

Residue tryptophan 20 coordinates substrate. Zn(2+)-binding residues include histidine 50, histidine 54, and aspartate 56. Catalysis depends on histidine 60, which acts as the Proton donor/acceptor. Residues histidine 161 and glutamate 173 each coordinate Zn(2+).

It belongs to the Cyclase 1 superfamily. KynB family. In terms of assembly, homodimer. Zn(2+) is required as a cofactor.

It carries out the reaction N-formyl-L-kynurenine + H2O = L-kynurenine + formate + H(+). The protein operates within amino-acid degradation; L-tryptophan degradation via kynurenine pathway; L-kynurenine from L-tryptophan: step 2/2. Functionally, catalyzes the hydrolysis of N-formyl-L-kynurenine to L-kynurenine, the second step in the kynurenine pathway of tryptophan degradation. In Bacillus cytotoxicus (strain DSM 22905 / CIP 110041 / 391-98 / NVH 391-98), this protein is Kynurenine formamidase.